The sequence spans 137 residues: Large ribosomal subunit protein uL16 (137 aa).

The segment covering 1–13 (MLQPKRRKYRKEQ) has biased composition (basic residues). Positions 1-22 (MLQPKRRKYRKEQKGRNTGVAT) are disordered.

This sequence belongs to the universal ribosomal protein uL16 family. In terms of assembly, part of the 50S ribosomal subunit.

Functionally, binds 23S rRNA and is also seen to make contacts with the A and possibly P site tRNAs. This is Large ribosomal subunit protein uL16 from Polynucleobacter asymbioticus (strain DSM 18221 / CIP 109841 / QLW-P1DMWA-1) (Polynucleobacter necessarius subsp. asymbioticus).